The following is a 484-amino-acid chain: Glutamate--tRNA ligase (484 aa).

Positions Pro11–Asn21 match the 'HIGH' region motif. Residues Lys252–Arg256 carry the 'KMSKS' region motif. Residue Lys255 coordinates ATP.

The protein belongs to the class-I aminoacyl-tRNA synthetase family. Glutamate--tRNA ligase type 1 subfamily. In terms of assembly, monomer.

The protein resides in the cytoplasm. The enzyme catalyses tRNA(Glu) + L-glutamate + ATP = L-glutamyl-tRNA(Glu) + AMP + diphosphate. Functionally, catalyzes the attachment of glutamate to tRNA(Glu) in a two-step reaction: glutamate is first activated by ATP to form Glu-AMP and then transferred to the acceptor end of tRNA(Glu). The polypeptide is Glutamate--tRNA ligase (Staphylococcus haemolyticus (strain JCSC1435)).